Reading from the N-terminus, the 291-residue chain is Pyridoxal 5'-phosphate synthase subunit PdxS (291 aa).

Asp-23 provides a ligand contact to D-ribose 5-phosphate. Catalysis depends on Lys-80, which acts as the Schiff-base intermediate with D-ribose 5-phosphate. Gly-152 serves as a coordination point for D-ribose 5-phosphate. Arg-164 provides a ligand contact to D-glyceraldehyde 3-phosphate. Residues Gly-213 and 234-235 (GS) contribute to the D-ribose 5-phosphate site.

It belongs to the PdxS/SNZ family. In the presence of PdxT, forms a dodecamer of heterodimers.

The enzyme catalyses aldehydo-D-ribose 5-phosphate + D-glyceraldehyde 3-phosphate + L-glutamine = pyridoxal 5'-phosphate + L-glutamate + phosphate + 3 H2O + H(+). It functions in the pathway cofactor biosynthesis; pyridoxal 5'-phosphate biosynthesis. Functionally, catalyzes the formation of pyridoxal 5'-phosphate from ribose 5-phosphate (RBP), glyceraldehyde 3-phosphate (G3P) and ammonia. The ammonia is provided by the PdxT subunit. Can also use ribulose 5-phosphate and dihydroxyacetone phosphate as substrates, resulting from enzyme-catalyzed isomerization of RBP and G3P, respectively. This is Pyridoxal 5'-phosphate synthase subunit PdxS from Desulfitobacterium hafniense (strain DSM 10664 / DCB-2).